A 268-amino-acid chain; its full sequence is Tryptophan synthase alpha chain (268 aa).

Residues glutamate 49 and aspartate 60 each act as proton acceptor in the active site.

Belongs to the TrpA family. Tetramer of two alpha and two beta chains.

The enzyme catalyses (1S,2R)-1-C-(indol-3-yl)glycerol 3-phosphate + L-serine = D-glyceraldehyde 3-phosphate + L-tryptophan + H2O. Its pathway is amino-acid biosynthesis; L-tryptophan biosynthesis; L-tryptophan from chorismate: step 5/5. The alpha subunit is responsible for the aldol cleavage of indoleglycerol phosphate to indole and glyceraldehyde 3-phosphate. This Shigella boydii serotype 18 (strain CDC 3083-94 / BS512) protein is Tryptophan synthase alpha chain.